Consider the following 130-residue polypeptide: Small ribosomal subunit protein uS9 (130 aa).

A disordered region spans residues 104-130 (LTRDPRMKERKKYGLKKARRAPQFSKR). The segment covering 111-130 (KERKKYGLKKARRAPQFSKR) has biased composition (basic residues).

The protein belongs to the universal ribosomal protein uS9 family.

The sequence is that of Small ribosomal subunit protein uS9 from Ruminiclostridium cellulolyticum (strain ATCC 35319 / DSM 5812 / JCM 6584 / H10) (Clostridium cellulolyticum).